The following is a 238-amino-acid chain: Isoamyl acetate-hydrolyzing esterase (238 aa).

Ser12 acts as the Nucleophile in catalysis. The Proton donor role is filled by Asp187. Residue His190 is the Proton acceptor of the active site.

Belongs to the 'GDSL' lipolytic enzyme family. IAH1 subfamily. In terms of assembly, homodimer.

The catalysed reaction is 3-methylbutyl acetate + H2O = 3-methylbutanol + acetate + H(+). In terms of biological role, plays a crucial role in the hydrolysis of isoamyl acetate in sake mash. Hydrolyzes short chain esters from acetate (C2) to hexanoate (C6), showing more specificity for shorter chain exters. No activity for decanoate (C10) esters. This is Isoamyl acetate-hydrolyzing esterase from Saccharomyces cerevisiae (strain ATCC 204508 / S288c) (Baker's yeast).